The primary structure comprises 413 residues: MKPICIIPARSGSKGLPDKNMLFLAGKPMIFHTIDAAIESGMFDKKDIFVSTDSELYREICLERGISVVMRKPELSTDQATSYDMLKDFLSDYEDNQEFVLLQVTSPLRKSWHIKEAMEYYSSHDVDNVVSFSEVEKHPGLFTTLSDKGYAIDMVGADKGYRRQDLQPLYYPNGAIFISNKETYLREKSFFTSRTYAYQMAKEFSLDVDTRDDFIHVIGHLFFDYAIREKENKVFYKEGYSRLFNREASKIILGDSKTISISLENYHNYSQGGVTLATMLENLPNFLTANVTEAFVSIGVNDLITGYSVEEIFSNFQKLYSLLAENKIKMRFTTIAYTLFRETVNNADIEKINQWLTEFCYQNQIPLLDINRFLSKDGNLNYHLTSDGLHFTQEANDLLQSQYQLFVDEVKTL.

It belongs to the CMP-NeuNAc synthase family. The cofactor is Mg(2+). It depends on Mn(2+) as a cofactor.

It localises to the cytoplasm. The catalysed reaction is an N-acylneuraminate + CTP = a CMP-N-acyl-beta-neuraminate + diphosphate. Its function is as follows. Catalyzes the formation of CMP-N-acetylneuraminic acid (CMP-NeuNAc), which is essential for the formation of the capsule. This chain is N-acylneuraminate cytidylyltransferase (neuA), found in Streptococcus agalactiae serotype Ia (strain ATCC 27591 / A909 / CDC SS700).